The primary structure comprises 298 residues: ATP synthase gamma chain (298 aa).

The protein belongs to the ATPase gamma chain family. In terms of assembly, F-type ATPases have 2 components, CF(1) - the catalytic core - and CF(0) - the membrane proton channel. CF(1) has five subunits: alpha(3), beta(3), gamma(1), delta(1), epsilon(1). CF(0) has three main subunits: a, b and c.

Its subcellular location is the cell inner membrane. Produces ATP from ADP in the presence of a proton gradient across the membrane. The gamma chain is believed to be important in regulating ATPase activity and the flow of protons through the CF(0) complex. The sequence is that of ATP synthase gamma chain from Granulibacter bethesdensis (strain ATCC BAA-1260 / CGDNIH1).